We begin with the raw amino-acid sequence, 138 residues long: Large ribosomal subunit protein eL14A (138 aa).

S2 carries the post-translational modification N-acetylserine.

Belongs to the eukaryotic ribosomal protein eL14 family. As to quaternary structure, component of the large ribosomal subunit (LSU). Mature yeast ribosomes consist of a small (40S) and a large (60S) subunit. The 40S small subunit contains 1 molecule of ribosomal RNA (18S rRNA) and 33 different proteins (encoded by 57 genes). The large 60S subunit contains 3 rRNA molecules (25S, 5.8S and 5S rRNA) and 46 different proteins (encoded by 81 genes). In terms of processing, N-terminally acetylated by acetyltransferase NatA.

The protein localises to the cytoplasm. Its function is as follows. Component of the ribosome, a large ribonucleoprotein complex responsible for the synthesis of proteins in the cell. The small ribosomal subunit (SSU) binds messenger RNAs (mRNAs) and translates the encoded message by selecting cognate aminoacyl-transfer RNA (tRNA) molecules. The large subunit (LSU) contains the ribosomal catalytic site termed the peptidyl transferase center (PTC), which catalyzes the formation of peptide bonds, thereby polymerizing the amino acids delivered by tRNAs into a polypeptide chain. The nascent polypeptides leave the ribosome through a tunnel in the LSU and interact with protein factors that function in enzymatic processing, targeting, and the membrane insertion of nascent chains at the exit of the ribosomal tunnel. The polypeptide is Large ribosomal subunit protein eL14A (Saccharomyces cerevisiae (strain ATCC 204508 / S288c) (Baker's yeast)).